The chain runs to 689 residues: Elongation factor G (689 aa).

One can recognise a tr-type G domain in the interval Ala-9 to Leu-283. Residues Ala-18–Thr-25, Asp-82–His-86, and Asn-136–Asp-139 each bind GTP.

It belongs to the TRAFAC class translation factor GTPase superfamily. Classic translation factor GTPase family. EF-G/EF-2 subfamily.

The protein resides in the cytoplasm. Functionally, catalyzes the GTP-dependent ribosomal translocation step during translation elongation. During this step, the ribosome changes from the pre-translocational (PRE) to the post-translocational (POST) state as the newly formed A-site-bound peptidyl-tRNA and P-site-bound deacylated tRNA move to the P and E sites, respectively. Catalyzes the coordinated movement of the two tRNA molecules, the mRNA and conformational changes in the ribosome. This is Elongation factor G from Clostridium botulinum (strain Okra / Type B1).